Here is a 330-residue protein sequence, read N- to C-terminus: Cytosolic iron-sulfur protein assembly protein 1 (330 aa).

7 WD repeats span residues 12–53 (LYKE…DVLD), 56–95 (AHKK…DRTF), 105–144 (GHEN…EEYE), 151–190 (EHSQ…WECV), 195–236 (GHEG…EDDQ), 248–286 (VHKR…WKVF), and 292–330 (CHGV…EKAA).

The protein belongs to the WD repeat CIA1 family. Interacts with NAR1.

The protein resides in the cytoplasm. Its subcellular location is the nucleus. In terms of biological role, essential component of the cytosolic iron-sulfur (Fe/S) protein assembly machinery. Required for the maturation of extramitochondrial Fe/S proteins. In Saccharomyces cerevisiae (strain ATCC 204508 / S288c) (Baker's yeast), this protein is Cytosolic iron-sulfur protein assembly protein 1.